Consider the following 375-residue polypeptide: Probable neutral protease 2 homolog ARB_05817 (375 aa).

A signal peptide spans 1–19 (MQVIVALAALGSLAAPALG). The propeptide occupies 20-189 (FSIPRGVPVS…RGPLTRINKR (170 aa)). Disulfide bonds link Cys-197–Cys-267 and Cys-274–Cys-292. His-317 contacts Zn(2+). The active site involves Glu-318. Positions 321 and 332 each coordinate Zn(2+).

Belongs to the peptidase M35 family. Requires Zn(2+) as cofactor.

Its subcellular location is the secreted. The enzyme catalyses Preferential cleavage of bonds with hydrophobic residues in P1'. Also 3-Asn-|-Gln-4 and 8-Gly-|-Ser-9 bonds in insulin B chain.. Functionally, probable secreted metalloprotease that shows high activities on basic nuclear substrates such as histone and protamine. May be involved in virulence. The protein is Probable neutral protease 2 homolog ARB_05817 of Arthroderma benhamiae (strain ATCC MYA-4681 / CBS 112371) (Trichophyton mentagrophytes).